The chain runs to 449 residues: UDP-N-acetylmuramate--L-alanine ligase (449 aa).

121 to 127 (GAHGKSS) provides a ligand contact to ATP.

The protein belongs to the MurCDEF family.

It localises to the cytoplasm. The catalysed reaction is UDP-N-acetyl-alpha-D-muramate + L-alanine + ATP = UDP-N-acetyl-alpha-D-muramoyl-L-alanine + ADP + phosphate + H(+). Its pathway is cell wall biogenesis; peptidoglycan biosynthesis. Its function is as follows. Cell wall formation. The chain is UDP-N-acetylmuramate--L-alanine ligase from Helicobacter pylori (strain P12).